The following is a 214-amino-acid chain: Cytochrome b (214 aa).

The next 4 helical transmembrane spans lie at 31–51, 75–96, 111–131, and 176–196; these read FGSMLLTCLMIQIATGFFLAI, WIMQNTHAIGASLFFICIYIHI, WLSGTTLLIILMATAFFGYVL, and FFALHFILPFAIISMSSIHIL. Residues H81 and H95 each contribute to the heme b site. Heme b-binding residues include H180 and H194. H199 is an a ubiquinone binding site.

The protein belongs to the cytochrome b family. In terms of assembly, the cytochrome bc1 complex contains 3 respiratory subunits (MT-CYB, CYC1 and UQCRFS1), 2 core proteins (UQCRC1 and UQCRC2) and probably 6 low-molecular weight proteins. Requires heme b as cofactor.

The protein localises to the mitochondrion inner membrane. In terms of biological role, component of the ubiquinol-cytochrome c reductase complex (complex III or cytochrome b-c1 complex) that is part of the mitochondrial respiratory chain. The b-c1 complex mediates electron transfer from ubiquinol to cytochrome c. Contributes to the generation of a proton gradient across the mitochondrial membrane that is then used for ATP synthesis. The polypeptide is Cytochrome b (MT-CYB) (Agkistrodon contortrix contortrix (Southern copperhead)).